The sequence spans 626 residues: Carnitine O-acetyltransferase (626 aa).

Position 93 is an N6-succinyllysine (Lys-93). The residue at position 261 (Lys-261) is an N6-acetyllysine; alternate. At Lys-261 the chain carries N6-succinyllysine; alternate. Lys-268 carries the N6-acetyllysine modification. The active-site Proton acceptor is the His-343. CoA contacts are provided by residues Lys-419 and 423-430; that span reads KSQKLSPD. Residues Tyr-452 and Ser-454 each coordinate (R)-carnitine. CoA is bound at residue Ser-456. Thr-465 is a (R)-carnitine binding site. CoA-binding residues include Arg-504 and Gln-555. The Microbody targeting signal motif lies at 624–626; that stretch reads AKL.

This sequence belongs to the carnitine/choline acetyltransferase family. As to quaternary structure, monomer. In terms of tissue distribution, expressed in flagella of epididymal sperm.

The protein localises to the endoplasmic reticulum. The protein resides in the peroxisome. Its subcellular location is the mitochondrion inner membrane. The enzyme catalyses (R)-carnitine + acetyl-CoA = O-acetyl-(R)-carnitine + CoA. It carries out the reaction propanoyl-CoA + (R)-carnitine = O-propanoyl-(R)-carnitine + CoA. The catalysed reaction is butanoyl-CoA + (R)-carnitine = O-butanoyl-(R)-carnitine + CoA. It catalyses the reaction hexanoyl-CoA + (R)-carnitine = O-hexanoyl-(R)-carnitine + CoA. The enzyme catalyses octanoyl-CoA + (R)-carnitine = O-octanoyl-(R)-carnitine + CoA. It carries out the reaction decanoyl-CoA + (R)-carnitine = O-decanoyl-(R)-carnitine + CoA. The catalysed reaction is 3-methylbutanoyl-CoA + (R)-carnitine = O-3-methylbutanoyl-(R)-carnitine + CoA. It catalyses the reaction 2-methylpropanoyl-CoA + (R)-carnitine = O-isobutanoyl-(R)-carnitine + CoA. The enzyme catalyses 2-methylbutanoyl-CoA + (R)-carnitine = O-2-methylbutanoyl-(R)-carnitine + CoA. It carries out the reaction acetoacetyl-CoA + (R)-carnitine = O-3-oxobutanoyl-(R)-carnitine + CoA. The catalysed reaction is 3-hydroxybutanoyl-CoA + (R)-carnitine = O-3-hydroxybutanoyl-(R)-carnitine + CoA. It catalyses the reaction 4,8-dimethylnonanoyl-CoA + (R)-carnitine = O-4,8-dimethylnonanoyl-(R)-carnitine + CoA. The enzyme catalyses 2,6-dimethylheptanoyl-CoA + (R)-carnitine = O-2,6-dimethylheptanoyl-(R)-carnitine + CoA. Its function is as follows. Catalyzes the reversible transfer of acyl groups from carnitine to coenzyme A (CoA) and regulates the acyl-CoA/CoA ratio. Also plays a crucial role in the transport of fatty acids for beta-oxidation. Responsible for the synthesis of short- and branched-chain acylcarnitines. Active towards some branched-chain amino acid oxidation pathway (BCAAO) intermediates. Trans-2-enoyl-CoAs and 2-methylacyl-CoAs are poor substrates. The sequence is that of Carnitine O-acetyltransferase from Rattus norvegicus (Rat).